Consider the following 87-residue polypeptide: Small ribosomal subunit protein bS20 (87 aa).

The protein belongs to the bacterial ribosomal protein bS20 family.

Its function is as follows. Binds directly to 16S ribosomal RNA. This is Small ribosomal subunit protein bS20 from Alkaliphilus oremlandii (strain OhILAs) (Clostridium oremlandii (strain OhILAs)).